The primary structure comprises 436 residues: Kynureninase (436 aa).

Pyridoxal 5'-phosphate-binding positions include Leu-88, Thr-89, 116-119, Asp-202, His-205, and Tyr-227; that span reads FPSD. An N6-(pyridoxal phosphate)lysine modification is found at Lys-228. Trp-280 and Asn-308 together coordinate pyridoxal 5'-phosphate.

It belongs to the kynureninase family. In terms of assembly, homodimer. Pyridoxal 5'-phosphate is required as a cofactor.

It is found in the cytoplasm. The enzyme catalyses L-kynurenine + H2O = anthranilate + L-alanine + H(+). It carries out the reaction 3-hydroxy-L-kynurenine + H2O = 3-hydroxyanthranilate + L-alanine + H(+). The protein operates within amino-acid degradation; L-kynurenine degradation; L-alanine and anthranilate from L-kynurenine: step 1/1. It participates in cofactor biosynthesis; NAD(+) biosynthesis; quinolinate from L-kynurenine: step 2/3. Functionally, catalyzes the cleavage of L-kynurenine (L-Kyn) and L-3-hydroxykynurenine (L-3OHKyn) into anthranilic acid (AA) and 3-hydroxyanthranilic acid (3-OHAA), respectively. This chain is Kynureninase, found in Schistosoma japonicum (Blood fluke).